A 141-amino-acid polypeptide reads, in one-letter code: Plasmatocyte-spreading peptide (141 aa).

The first 22 residues, 1 to 22 (MKLTINILFCLILISQYNSANG), serve as a signal peptide directing secretion. The propeptide occupies 23-118 (NLRDLFNNVR…ATGGKDDKGR (96 aa)). Over residues 46-58 (VKTLFHPSDKSGN) the composition is skewed to basic and acidic residues. The disordered stretch occupies residues 46 to 118 (VKTLFHPSDK…ATGGKDDKGR (73 aa)). The span at 83–98 (PVAVTPAPVVSTTTQA) shows a compositional bias: low complexity. Polar residues predominate over residues 99-108 (SAPTVATNGT). Cys125 and Cys137 are oxidised to a cystine.

This sequence belongs to the GBP/PSP1/paralytic peptide family.

Mediates the spreading of plasmatocytes to foreign surfaces. Plasmocytes are a class of hemocytes involved in insect cellular immunity. The sequence is that of Plasmatocyte-spreading peptide (PSP1) from Chrysodeixis includens (Soybean looper).